The primary structure comprises 60 residues: Sperm protamine P1 (60 aa).

The disordered stretch occupies residues 1–60 (MARYRHSRSRSRSRYRRRRRRRSRYRSQRRRYRGRRRRRSRRGRRRGYSRRRYSRRRRRY).

Belongs to the protamine P1 family. As to expression, testis.

The protein localises to the nucleus. The protein resides in the chromosome. In terms of biological role, protamines substitute for histones in the chromatin of sperm during the haploid phase of spermatogenesis. They compact sperm DNA into a highly condensed, stable and inactive complex. In Osphranter rufus (Red kangaroo), this protein is Sperm protamine P1 (PRM1).